Reading from the N-terminus, the 875-residue chain is Aminopeptidase M1-B (875 aa).

The segment at 96–203 is required for membrane association; the sequence is IGEGVLKMDF…MSTYLVAIVV (108 aa). Substrate contacts are provided by residues glutamate 136 and 269-273; that span reads GAMEN. Histidine 305 is a binding site for Zn(2+). Glutamate 306 (proton acceptor) is an active-site residue. The Zn(2+) site is built by histidine 309 and glutamate 328. Positions 722–723 match the Dileucine internalization motif motif; that stretch reads LL.

This sequence belongs to the peptidase M1 family. In terms of assembly, homodimer. Zn(2+) is required as a cofactor.

It localises to the membrane. The protein localises to the microsome membrane. It is found in the cytoplasm. It catalyses the reaction Release of an N-terminal amino acid, Xaa-|-Yaa- from a peptide, amide or arylamide. Xaa is preferably Ala, but may be most amino acids including Pro (slow action). When a terminal hydrophobic residue is followed by a prolyl residue, the two may be released as an intact Xaa-Pro dipeptide.. This Oryza sativa subsp. japonica (Rice) protein is Aminopeptidase M1-B.